The sequence spans 126 residues: MIKIDFDKMGGLIPAVIQDYQSGEVLMVAFMDQKTLDLTLKDGKTWFFSRTRNKYWMKGEESGNTQEVMEVLTDCDADTVVIKVKQNGPAACHTGNRSCFYVKWEDGQWVEHSNPLFDPNEVYKKG.

Aspartate 74 contacts Mg(2+). Zn(2+) is bound at residue cysteine 75. The Mg(2+) site is built by aspartate 76 and aspartate 78. Zn(2+) contacts are provided by cysteine 92 and cysteine 99.

The protein belongs to the PRA-CH family. In terms of assembly, homodimer. The cofactor is Mg(2+). It depends on Zn(2+) as a cofactor.

Its subcellular location is the cytoplasm. The enzyme catalyses 1-(5-phospho-beta-D-ribosyl)-5'-AMP + H2O = 1-(5-phospho-beta-D-ribosyl)-5-[(5-phospho-beta-D-ribosylamino)methylideneamino]imidazole-4-carboxamide. Its pathway is amino-acid biosynthesis; L-histidine biosynthesis; L-histidine from 5-phospho-alpha-D-ribose 1-diphosphate: step 3/9. Its function is as follows. Catalyzes the hydrolysis of the adenine ring of phosphoribosyl-AMP. The protein is Phosphoribosyl-AMP cyclohydrolase of Geotalea daltonii (strain DSM 22248 / JCM 15807 / FRC-32) (Geobacter daltonii).